A 187-amino-acid chain; its full sequence is Preprocaerulein clone PXC202 (187 aa).

The propeptide occupies 1–9 (NDERRFADG). The segment at 1-21 (NDERRFADGQQDYTGWMDFGR) is disordered. Tyr-13 bears the Sulfotyrosine mark. Phe-19 carries the post-translational modification Phenylalanine amide. Residues 23-73 (DDEDDVNERDVRGFGSFLGKALKAALKIGANALGGSPQQREANDERRFADG) constitute a propeptide that is removed on maturation. Position 77 is a sulfotyrosine (Tyr-77). Phe-83 is modified (phenylalanine amide). A propeptide spanning residues 87-137 (DDEDDVNERDVRGFGSFLGKALKAALKIGANALGGSLQQREVNDERRFADG) is cleaved from the precursor. Tyr-141 carries the post-translational modification Sulfotyrosine. Position 147 is a phenylalanine amide (Phe-147). The propeptide occupies 151–152 (DG). Tyr-156 is modified (sulfotyrosine). Phe-162 is modified (phenylalanine amide). A propeptide spanning residues 166–187 (DDEDDVHERDVRGFGSFLGKAL) is cleaved from the precursor.

It belongs to the gastrin/cholecystokinin family. Expressed by the skin glands.

It localises to the secreted. Its function is as follows. The pharmacological activities of caerulein are quite similar to the physiological activities of gastrin and related peptides. The chain is Preprocaerulein clone PXC202 from Xenopus laevis (African clawed frog).